A 431-amino-acid chain; its full sequence is uncharacterized protein (431 aa).

Disordered regions lie at residues 17–66 and 81–415; these read VDPE…GQQA and GSVT…ALPR. Basic and acidic residues predominate over residues 91-106; the sequence is DKADREPAARPRDPRS. The segment covering 173–195 has biased composition (basic residues); sequence TYRRRRPTAATPSRKKKARRGPK. Positions 235–244 are enriched in low complexity; it reads RTPGPVHSAA. Gly residues predominate over residues 299–312; the sequence is RMGGSSGGRGGTPG. The segment covering 317–342 has biased composition (low complexity); it reads RAAPGARPTAPDGAPGRWDGPADGPA. The span at 343–360 shows a compositional bias: gly residues; it reads PGLGRGGWGVGREAGGSG.

This is an uncharacterized protein from Homo sapiens (Human).